Reading from the N-terminus, the 148-residue chain is Hemoglobin subunit beta-2 (148 aa).

The Globin domain maps to 3–148; the sequence is EWTDAERTAI…VVSALCRQYH (146 aa). The heme b site is built by His-64 and His-93.

Heterotetramer of two alpha chains and two beta chains. Red blood cells.

Its function is as follows. Involved in oxygen transport from gills to the various peripheral tissues. The chain is Hemoglobin subunit beta-2 (ba2) from Danio rerio (Zebrafish).